Consider the following 930-residue polypeptide: Urea transporter 2 (930 aa).

Basic and acidic residues predominate over residues 1–11 (MSDHHPLKEMS). Positions 1–90 (MSDHHPLKEM…KRRESEVSRR (90 aa)) are disordered. Low complexity-rich tracts occupy residues 12–25 (DSNS…PLSS) and 32–43 (SELSSPTWPSSS). Over residues 56 to 89 (PEEKDLRSSDEDSHIVKIEKPNERNKRRESEVSR) the composition is skewed to basic and acidic residues. The next 8 helical transmembrane spans lie at 145–165 (ISGL…TIAG), 185–205 (AIAS…MAVF), 213–233 (WWLL…SSAL), 242–262 (LPVF…ATGH), 280–300 (NITW…VGVG), 311–331 (GGVI…HAAI), 350–372 (IYLG…MFYA), and 401–421 (VVGV…FLLL). The interval 452–479 (SEEEKSPNGGSGEQSHGSGQWKAEESSE) is disordered. Serine 487 is subject to Phosphoserine. Helical transmembrane passes span 610-630 (GILI…SGCL), 648-668 (AIAA…MAVF), 676-696 (WWLL…SSAL), and 705-725 (LPVF…ATGH). N-linked (GlcNAc...) asparagine glycosylation occurs at asparagine 743. Transmembrane regions (helical) follow at residues 774–794 (GGIF…HAAI), 813–833 (IYFG…GGMF), 842–862 (LLAI…ANML), and 864–884 (VFGL…FLLL).

This sequence belongs to the urea transporter family. In terms of tissue distribution, highly expressed in kidney medulla (at protein level). Also detected in testes, heart, brain and liver (at protein level). In the kidney, present in thin descending limbs of the loop of Henle and in the middle and terminal inner medullary collecting ducts. As to expression, expressed in the kidney medulla. Expressed in the peritubular myoid cells forming the outermost layer of the seminiferous tubules within the testes and is not detected in kidney. Expression levels are coordinated with the stage of testes development and increase 15 days postpartum, commensurate with the start of seminiferous tubule fluid movement.

It localises to the apical cell membrane. The protein localises to the basolateral cell membrane. It carries out the reaction urea(in) = urea(out). With respect to regulation, inhibited by phloretin. Activated by forskolin, 3-isobutyl-1-methylxanthine (IBMX) and cAMP. Inhibited by phloretin. Its activity is regulated as follows. Inhibited by phloretin. Activated by forskolin, 3-isobutyl-1-methylxanthine (IBMX) and cAMP. Functionally, mediates the transport of urea driven by a concentration gradient across the cell membrane of the renal inner medullary collecting duct which is critical to the urinary concentrating mechanism. In terms of biological role, mediates the transport of urea driven by a concentration gradient across the cell membrane. Implicated in the urea movement across the blood-testis barrier and does not translocate water. The polypeptide is Urea transporter 2 (Slc14a2) (Mus musculus (Mouse)).